The sequence spans 502 residues: MKIAVIGAGVTGLAAAARIASQGHEVTIFEKNNNVGGRMNQLKKDGFTFDMGPTIVMMPDVYKDVFTACGKNYEDYIELRQLRYIYDVYFDHDDRITVPTDLAELQQMLESIEPGSTHGFMSFLTDVYKKYEIARRYFLERTYRKPSDFYNMTSLVQGAKLKTLNHADQLIEHYIDNEKIQKLLAFQTLYIGIDPKRGPSLYSIIPMIEMMFGVHFIKGGMYGMAQGLAQLNKDLGVNIELNAEIEQIIIDPKFKRADAIKVNGDIRKFDKILCTADFPSVAESLMPDFAPIKKYPPHKIADLDYSCSAFLMYIGIDIDVTDQVRLHNVIFSDDFRGNIEEIFEGRLSYDPSIYVYVPAVADKSLAPEGKTGIYVLMPTPELKTGSGIDWSDEALTQQIKEIIYRKLATIEVFEDIKSHIVSETIFTPNDFEQTYHAKFGSAFGLMPTLAQSNYYRPQNVSRDYKDLYFAGASTHPGAGVPIVLTSAKITVDEMIKDIERGV.

5–17 contributes to the FAD binding site; sequence VIGAGVTGLAAAA.

The protein belongs to the carotenoid/retinoid oxidoreductase family. CrtN subfamily.

The catalysed reaction is 15-cis-4,4'-diapophytoene + 3 FAD + 3 H(+) = all-trans-4,4'-diaponeurosporene + 3 FADH2. Its pathway is carotenoid biosynthesis; staphyloxanthin biosynthesis; staphyloxanthin from farnesyl diphosphate: step 2/5. Its function is as follows. Involved in the biosynthesis of the yellow-orange carotenoid staphyloxanthin, which plays a role in the virulence via its protective function against oxidative stress. Catalyzes three successive dehydrogenation reactions that lead to the introduction of three double bonds into 4,4'-diapophytoene (dehydrosqualene), with 4,4'-diapophytofluene and 4,4'-diapo-zeta-carotene as intermediates, and 4,4'-diaponeurosporene (the major deep-yellow pigment in staphylococci strains) as the end product. In Staphylococcus aureus (strain USA300), this protein is 4,4'-diapophytoene desaturase (4,4'-diaponeurosporene-forming).